The sequence spans 716 residues: Zinc finger protein on ecdysone puffs (716 aa).

2 disordered regions span residues 103–168 and 182–208; these read PSLL…GGIR and KNANQNKKKEPTPGEKKIESPTKESPY. The segment covering 188-203 has biased composition (basic and acidic residues); it reads KKKEPTPGEKKIESPT. Position 201 is a phosphoserine (Ser-201). Thr-203 carries the phosphothreonine modification. Ser-206 is subject to Phosphoserine. The segment at 216-240 adopts a C2H2-type 1 zinc-finger fold; sequence FYCHLCKKHMWDANSFENHIKGRTH. Residues 288–310 form a C2H2-type 2; atypical zinc finger; the sequence is DYCTMCDLNFHGHISTHRKSEGH. The C2H2-type 3 zinc-finger motif lies at 319 to 343; it reads PKCIECNKEFATRIDYDTHLLSAEH. A compositionally biased stretch (basic and acidic residues) spans 350–359; the sequence is NNTKVGERKR. A disordered region spans residues 350–447; sequence NNTKVGERKR…EEEEVALPVD (98 aa). A Nuclear localization signal motif is present at residues 379–383; the sequence is KRKKK. Basic and acidic residues predominate over residues 386–401; that stretch reads KKEGEAADGEAKKEGA. Residues 405-414 are compositionally biased toward acidic residues; that stretch reads EGAEGDEAEG. The span at 415 to 431 shows a compositional bias: basic and acidic residues; sequence EEAKEGEEAADETKEGD. Residues 432–447 show a composition bias toward acidic residues; it reads ELNESQEEEEVALPVD. The C2H2-type 4 zinc-finger motif lies at 489–513; sequence YECSVCSKFFDTEVTAEIHSRTATH. The disordered stretch occupies residues 534–716; it reads RAAAALEENE…QRARGRYNRY (183 aa). Basic and acidic residues predominate over residues 541-551; it reads ENERKKRKVEE. Residues 544–548 carry the Nuclear localization signal motif; it reads RKKRK. Positions 560-638 are enriched in acidic residues; the sequence is AAEETTEGAE…GQEGEQEPEP (79 aa). The span at 639–656 shows a compositional bias: pro residues; the sequence is EPAPVQTPAPAEPAPPAK. The segment covering 657-704 has biased composition (low complexity); that stretch reads TPAKTPTKAAAPAAVASPAAAATSADASPSPAKKATPARAAAGAKATP. A phosphoserine mark is found at Ser-673, Ser-684, and Ser-686. Residue Thr-692 is modified to Phosphothreonine. Over residues 707–716 the composition is skewed to basic residues; it reads QRARGRYNRY.

The protein resides in the nucleus. It is found in the chromosome. Functionally, may play a role in the process of early and late gene activation, or possibly in RNA processing, for a defined set of developmentally regulated loci. This chain is Zinc finger protein on ecdysone puffs (Pep), found in Drosophila melanogaster (Fruit fly).